The primary structure comprises 221 residues: 2-C-methyl-D-erythritol 4-phosphate cytidylyltransferase (221 aa).

Belongs to the IspD/TarI cytidylyltransferase family. IspD subfamily.

The enzyme catalyses 2-C-methyl-D-erythritol 4-phosphate + CTP + H(+) = 4-CDP-2-C-methyl-D-erythritol + diphosphate. It functions in the pathway isoprenoid biosynthesis; isopentenyl diphosphate biosynthesis via DXP pathway; isopentenyl diphosphate from 1-deoxy-D-xylulose 5-phosphate: step 2/6. Catalyzes the formation of 4-diphosphocytidyl-2-C-methyl-D-erythritol from CTP and 2-C-methyl-D-erythritol 4-phosphate (MEP). The protein is 2-C-methyl-D-erythritol 4-phosphate cytidylyltransferase of Roseobacter denitrificans (strain ATCC 33942 / OCh 114) (Erythrobacter sp. (strain OCh 114)).